The sequence spans 433 residues: Tol-Pal system protein TolB (433 aa).

Residues 1–21 (MIKRLRGLLVMLCCVAGMAVA) form the signal peptide.

This sequence belongs to the TolB family. The Tol-Pal system is composed of five core proteins: the inner membrane proteins TolA, TolQ and TolR, the periplasmic protein TolB and the outer membrane protein Pal. They form a network linking the inner and outer membranes and the peptidoglycan layer.

The protein resides in the periplasm. Its function is as follows. Part of the Tol-Pal system, which plays a role in outer membrane invagination during cell division and is important for maintaining outer membrane integrity. In Pseudomonas putida (strain ATCC 47054 / DSM 6125 / CFBP 8728 / NCIMB 11950 / KT2440), this protein is Tol-Pal system protein TolB.